Here is a 183-residue protein sequence, read N- to C-terminus: Potassium-transporting ATPase KdpC subunit (183 aa).

A helical membrane pass occupies residues 10 to 30 (ASLLVLSLVTGVAYPLLVTGI).

It belongs to the KdpC family. As to quaternary structure, the system is composed of three essential subunits: KdpA, KdpB and KdpC.

The protein resides in the cell inner membrane. Its function is as follows. Part of the high-affinity ATP-driven potassium transport (or Kdp) system, which catalyzes the hydrolysis of ATP coupled with the electrogenic transport of potassium into the cytoplasm. This subunit acts as a catalytic chaperone that increases the ATP-binding affinity of the ATP-hydrolyzing subunit KdpB by the formation of a transient KdpB/KdpC/ATP ternary complex. The sequence is that of Potassium-transporting ATPase KdpC subunit from Pseudomonas aeruginosa (strain ATCC 15692 / DSM 22644 / CIP 104116 / JCM 14847 / LMG 12228 / 1C / PRS 101 / PAO1).